The chain runs to 491 residues: UDP-N-acetylmuramate--L-alanine ligase (491 aa).

Residue 126–132 coordinates ATP; that stretch reads GTHGKTT.

It belongs to the MurCDEF family.

The protein resides in the cytoplasm. It carries out the reaction UDP-N-acetyl-alpha-D-muramate + L-alanine + ATP = UDP-N-acetyl-alpha-D-muramoyl-L-alanine + ADP + phosphate + H(+). It functions in the pathway cell wall biogenesis; peptidoglycan biosynthesis. Cell wall formation. In Escherichia coli (strain K12 / MC4100 / BW2952), this protein is UDP-N-acetylmuramate--L-alanine ligase.